Consider the following 457-residue polypeptide: MDHLPIFCQLRDRDCLIVGGGDVAERKARLLLEAGARLTVNALNFIPQFTVWANEGMLTLVEGPFDETLLDSCWLAIAATDDDTVNQRVSDAAESRRIFCNVVDAPKAASFIMPSIIDRSPLMVAVSSGGTSPVLARLLREKLESLLPQHLGQVARYAGQLRARVKKQFATMGERRRFWEKFFVNDRLAQSLANADEKAVNATTERLFSEPLDHRGEVVLVGAGPGDAGLLTLKGLQQIQQADIVVYDRLVSDDIMNLVRRDADRVFVGKRAGYHCVPQEEINQILLREAQKGKRVVRLKGGDPFIFGRGGEELETLCHAGIPFSVVPGITAASGCSAYSGIPLTHRDYAQSVRLVTGHLKTGGELDWENLAAEKQTLVFYMGLNQAATIQEKLIAFGMQADMPVALVENGTSVKQRVVHGVLTQLGELAQQVESPALIIVGRVVALRDKLNWFSNH.

The precorrin-2 dehydrogenase /sirohydrochlorin ferrochelatase stretch occupies residues 1–204 (MDHLPIFCQL…ADEKAVNATT (204 aa)). Residues 22–23 (DV) and 43–44 (LN) each bind NAD(+). Serine 128 is modified (phosphoserine). A uroporphyrinogen-III C-methyltransferase region spans residues 216-457 (GEVVLVGAGP…RDKLNWFSNH (242 aa)). Proline 225 contacts S-adenosyl-L-methionine. Residue aspartate 248 is the Proton acceptor of the active site. The active-site Proton donor is lysine 270. S-adenosyl-L-methionine is bound by residues 301-303 (GGD), isoleucine 306, 331-332 (TA), methionine 382, and glycine 411.

The protein in the N-terminal section; belongs to the precorrin-2 dehydrogenase / sirohydrochlorin ferrochelatase family. In the C-terminal section; belongs to the precorrin methyltransferase family.

The catalysed reaction is uroporphyrinogen III + 2 S-adenosyl-L-methionine = precorrin-2 + 2 S-adenosyl-L-homocysteine + H(+). It carries out the reaction precorrin-2 + NAD(+) = sirohydrochlorin + NADH + 2 H(+). The enzyme catalyses siroheme + 2 H(+) = sirohydrochlorin + Fe(2+). It participates in cofactor biosynthesis; adenosylcobalamin biosynthesis; precorrin-2 from uroporphyrinogen III: step 1/1. Its pathway is cofactor biosynthesis; adenosylcobalamin biosynthesis; sirohydrochlorin from precorrin-2: step 1/1. It functions in the pathway porphyrin-containing compound metabolism; siroheme biosynthesis; precorrin-2 from uroporphyrinogen III: step 1/1. The protein operates within porphyrin-containing compound metabolism; siroheme biosynthesis; siroheme from sirohydrochlorin: step 1/1. It participates in porphyrin-containing compound metabolism; siroheme biosynthesis; sirohydrochlorin from precorrin-2: step 1/1. Multifunctional enzyme that catalyzes the SAM-dependent methylations of uroporphyrinogen III at position C-2 and C-7 to form precorrin-2 via precorrin-1. Then it catalyzes the NAD-dependent ring dehydrogenation of precorrin-2 to yield sirohydrochlorin. Finally, it catalyzes the ferrochelation of sirohydrochlorin to yield siroheme. This Salmonella paratyphi A (strain ATCC 9150 / SARB42) protein is Siroheme synthase.